Here is a 356-residue protein sequence, read N- to C-terminus: WAT1-related protein At1g68170 (356 aa).

The next 10 membrane-spanning stretches (helical) occupy residues 4–24 (ITAM…FKLA), 33–53 (VLVA…CFIF), 65–85 (LMLL…ILTI), 94–114 (TFTS…AALL), 125–145 (VGLA…VFIF), 176–196 (ISIL…LWFL), 210–230 (WNAT…ALCW), 245–265 (LLTI…VNAW), 273–293 (LFVS…GSFL), and 298–318 (LHLG…IVLW). EamA domains lie at 14–142 (TAGL…GALV) and 191–317 (ISLW…YIVL).

The protein belongs to the drug/metabolite transporter (DMT) superfamily. Plant drug/metabolite exporter (P-DME) (TC 2.A.7.4) family.

The protein localises to the membrane. The chain is WAT1-related protein At1g68170 from Arabidopsis thaliana (Mouse-ear cress).